Here is a 362-residue protein sequence, read N- to C-terminus: Peptide chain release factor 1 (362 aa).

An N5-methylglutamine modification is found at glutamine 232.

It belongs to the prokaryotic/mitochondrial release factor family. In terms of processing, methylated by PrmC. Methylation increases the termination efficiency of RF1.

The protein resides in the cytoplasm. Functionally, peptide chain release factor 1 directs the termination of translation in response to the peptide chain termination codons UAG and UAA. The chain is Peptide chain release factor 1 from Myxococcus xanthus.